Consider the following 262-residue polypeptide: Demethyldecarbamoylnovobiocin O-methyltransferase (262 aa).

Residue 64-65 participates in S-adenosyl-L-methionine binding; that stretch reads TM. Residue glutamate 72 is the Proton acceptor of the active site. S-adenosyl-L-methionine contacts are provided by residues 92 to 96, 122 to 126, phenylalanine 178, 196 to 197, and serine 202; these read ETGVW, DSFQG, and DG. Aspartate 196 contacts Mg(2+). The Mg(2+) site is built by aspartate 223 and aspartate 224.

The protein belongs to the methyltransferase TylF/MycF family. As to quaternary structure, homodimer. Requires Mg(2+) as cofactor.

It catalyses the reaction desmethyldescarbamoylnovobiocin + S-adenosyl-L-methionine = descarbamoylnovobiocin + S-adenosyl-L-homocysteine + H(+). Its pathway is antibiotic biosynthesis; novobiocin biosynthesis. S-adenosyl-L-methionine-dependent O-methyltransferase that methylates at 4-OH of the noviose moiety, the penultimate step in the novobiocin biosynthesis pathway. Novobiocin is an aminocoumarin family antibiotic that targets bacterial DNA gyrases. This chain is Demethyldecarbamoylnovobiocin O-methyltransferase (novP), found in Streptomyces niveus (Streptomyces spheroides).